A 242-amino-acid polypeptide reads, in one-letter code: UPF0246 protein SPP_1571 (242 aa).

It belongs to the UPF0246 family.

The sequence is that of UPF0246 protein SPP_1571 from Streptococcus pneumoniae (strain P1031).